Here is a 229-residue protein sequence, read N- to C-terminus: MSLLAQLDQKIAANGGLIVSCQPVPDSPLDKPEIVAAMALAAEQAGAVAIRIEGVANLQATRAVVSVPIIGIVKRDLEDSPVRITAYIEDVDALAQAGADIIAIDGTDRPRPVPVETLLARIHHHGLLAMTDCSTPEDGLACQKLGAEIIGTTLSGYTTPETPEEPDLALVKTLSDAGCRVIAEGRYNTPAQAADAMRHGAWAVTVGSAITRLEHICQWYNTVMKKAVL.

This sequence belongs to the NanE family.

It carries out the reaction an N-acyl-D-glucosamine 6-phosphate = an N-acyl-D-mannosamine 6-phosphate. It participates in amino-sugar metabolism; N-acetylneuraminate degradation; D-fructose 6-phosphate from N-acetylneuraminate: step 3/5. Converts N-acetylmannosamine-6-phosphate (ManNAc-6-P) to N-acetylglucosamine-6-phosphate (GlcNAc-6-P). The sequence is that of Putative N-acetylmannosamine-6-phosphate 2-epimerase from Escherichia coli O127:H6 (strain E2348/69 / EPEC).